Reading from the N-terminus, the 425-residue chain is Trigger factor (425 aa).

The PPIase FKBP-type domain maps to glycine 163 to proline 248.

This sequence belongs to the FKBP-type PPIase family. Tig subfamily.

It is found in the cytoplasm. It catalyses the reaction [protein]-peptidylproline (omega=180) = [protein]-peptidylproline (omega=0). Its function is as follows. Involved in protein export. Acts as a chaperone by maintaining the newly synthesized protein in an open conformation. Functions as a peptidyl-prolyl cis-trans isomerase. This chain is Trigger factor, found in Bacillus mycoides (strain KBAB4) (Bacillus weihenstephanensis).